Here is a 351-residue protein sequence, read N- to C-terminus: Anthranilate phosphoribosyltransferase (351 aa).

Residues Gly-80, 83 to 84, Thr-88, 90 to 93, 108 to 116, and Ser-120 contribute to the 5-phospho-alpha-D-ribose 1-diphosphate site; these read GD, NIST, and KHGNRSVTS. Gly-80 contributes to the anthranilate binding site. Ser-92 contributes to the Mg(2+) binding site. Asn-111 lines the anthranilate pocket. Residue Arg-166 coordinates anthranilate. Mg(2+) contacts are provided by Asp-229 and Glu-230.

It belongs to the anthranilate phosphoribosyltransferase family. As to quaternary structure, homodimer. Mg(2+) serves as cofactor.

The catalysed reaction is N-(5-phospho-beta-D-ribosyl)anthranilate + diphosphate = 5-phospho-alpha-D-ribose 1-diphosphate + anthranilate. The protein operates within amino-acid biosynthesis; L-tryptophan biosynthesis; L-tryptophan from chorismate: step 2/5. Catalyzes the transfer of the phosphoribosyl group of 5-phosphorylribose-1-pyrophosphate (PRPP) to anthranilate to yield N-(5'-phosphoribosyl)-anthranilate (PRA). In Chlorobium phaeovibrioides (strain DSM 265 / 1930) (Prosthecochloris vibrioformis (strain DSM 265)), this protein is Anthranilate phosphoribosyltransferase.